The primary structure comprises 309 residues: Homoserine kinase (309 aa).

P91–C101 is an ATP binding site.

The protein belongs to the GHMP kinase family. Homoserine kinase subfamily.

It localises to the cytoplasm. It carries out the reaction L-homoserine + ATP = O-phospho-L-homoserine + ADP + H(+). Its pathway is amino-acid biosynthesis; L-threonine biosynthesis; L-threonine from L-aspartate: step 4/5. Its function is as follows. Catalyzes the ATP-dependent phosphorylation of L-homoserine to L-homoserine phosphate. The chain is Homoserine kinase from Buchnera aphidicola subsp. Acyrthosiphon pisum (strain 5A).